The primary structure comprises 158 residues: NADH-quinone oxidoreductase subunit B (158 aa).

Positions 37, 38, 102, and 132 each coordinate [4Fe-4S] cluster.

Belongs to the complex I 20 kDa subunit family. NDH-1 is composed of 14 different subunits. Subunits NuoB, C, D, E, F, and G constitute the peripheral sector of the complex. The cofactor is [4Fe-4S] cluster.

It is found in the cell inner membrane. It catalyses the reaction a quinone + NADH + 5 H(+)(in) = a quinol + NAD(+) + 4 H(+)(out). Functionally, NDH-1 shuttles electrons from NADH, via FMN and iron-sulfur (Fe-S) centers, to quinones in the respiratory chain. The immediate electron acceptor for the enzyme in this species is believed to be ubiquinone. Couples the redox reaction to proton translocation (for every two electrons transferred, four hydrogen ions are translocated across the cytoplasmic membrane), and thus conserves the redox energy in a proton gradient. This is NADH-quinone oxidoreductase subunit B from Halorhodospira halophila (strain DSM 244 / SL1) (Ectothiorhodospira halophila (strain DSM 244 / SL1)).